Consider the following 73-residue polypeptide: Large ribosomal subunit protein bL31 (73 aa).

It belongs to the bacterial ribosomal protein bL31 family. Type A subfamily. In terms of assembly, part of the 50S ribosomal subunit.

Functionally, binds the 23S rRNA. This is Large ribosomal subunit protein bL31 from Synechococcus sp. (strain JA-3-3Ab) (Cyanobacteria bacterium Yellowstone A-Prime).